Here is a 37-residue protein sequence, read N- to C-terminus: Large ribosomal subunit protein bL36 (37 aa).

Belongs to the bacterial ribosomal protein bL36 family.

This chain is Large ribosomal subunit protein bL36, found in Listeria innocua serovar 6a (strain ATCC BAA-680 / CLIP 11262).